We begin with the raw amino-acid sequence, 300 residues long: Cation-efflux pump FieF (300 aa).

The helical transmembrane segment at 24-44 threads the bilayer; sequence LLIKIFAWWYTGSVSILAALV. 2 residues coordinate Zn(2+): aspartate 45 and aspartate 49. The next 2 helical transmembrane spans lie at 82-102 and 114-134; these read AALA…LTGI and AGVG…LVTF. Zn(2+) is bound by residues histidine 153 and aspartate 157. The next 2 helical transmembrane spans lie at 156–176 and 178–198; these read SDVM…YGWH and ADAL…LRMG.

It belongs to the cation diffusion facilitator (CDF) transporter (TC 2.A.4) family. FieF subfamily. Homodimer.

Its subcellular location is the cell inner membrane. The catalysed reaction is Zn(2+)(in) + H(+)(out) = Zn(2+)(out) + H(+)(in). It carries out the reaction Cd(2+)(in) + H(+)(out) = Cd(2+)(out) + H(+)(in). The enzyme catalyses Fe(2+)(in) + H(+)(out) = Fe(2+)(out) + H(+)(in). Its function is as follows. Divalent metal cation transporter which exports Zn(2+), Cd(2+) and possibly Fe(2+). May be involved in zinc and iron detoxification by efflux. The protein is Cation-efflux pump FieF of Klebsiella pneumoniae (strain 342).